A 927-amino-acid polypeptide reads, in one-letter code: DNA-binding protein RFX6 (927 aa).

Disordered stretches follow at residues 1 to 21 (MAKV…PQLP) and 81 to 108 (NFSS…QKKS). Positions 123–198 (TLQWLEDNYI…YHYYGIGIKE (76 aa)) form a DNA-binding region, RFX-type winged-helix.

The protein belongs to the RFX family. As to quaternary structure, interacts with RFX3. In the adult pancreas, expression is restricted to the islets where it could be detected in all endocrine lineages.

Its subcellular location is the nucleus. Transcription factor required to direct islet cell differentiation during endocrine pancreas development. Specifically required for the differentiation of 4 of the 5 islet cell types and for the production of insulin. Not required for pancreatic PP (polypeptide-producing) cells differentiation. Acts downstream of NEUROG3 and regulates the transcription factors involved in beta-cell maturation and function, thereby restricting the expression of the beta-cell differentiation and specification genes, and thus the beta-cell fate choice. Activates transcription by forming a heterodimer with RFX3 and binding to the X-box in the promoter of target genes. Involved in glucose-stimulated insulin secretion by promoting insulin and L-type calcium channel gene transcription. This chain is DNA-binding protein RFX6 (Rfx6), found in Mus musculus (Mouse).